A 433-amino-acid chain; its full sequence is MVSTTSLKTTKSEDIFAAAQKLMPGGVSSPVRAFKSVGGQPIVFDHVKGAYIWDVDGNQYIDYVGTWGPAICGHAHPEVIAALHDALDRGTSFGAPCLLENVLAEMVIDAVPSIEMVRFVNSGTEACMSVLRLMRAFTGRDKIIKFQGCYHGHADMFLVQAGSGVATLGLPDSPGVPKTTTANTLTAPYNDLEAVKALFAENPDEIAGVILEPVVGNSGFVVPDGGFLQGLRELTNEYGALLVFDEVMTGFRLSYGGAQEKFGVTPDLTTLGKVIGGGLPVGAYGGRKDIMSMVAPAGPMYQAGTLSGNPLAMTAGIKTLELLQKPGTYNQLEQITQQLSEGLLKIAKEAGHQVCGGYIGAMFGLFFTEGPVRNYDDAKKSDLAKFGRFHRGMLEKGVYLAPSQFEAGFTSLAHTSEDIEKTLAAAKDVLSNL.

An N6-(pyridoxal phosphate)lysine modification is found at K273.

The protein belongs to the class-III pyridoxal-phosphate-dependent aminotransferase family. HemL subfamily. As to quaternary structure, homodimer. The cofactor is pyridoxal 5'-phosphate.

The protein resides in the cytoplasm. The enzyme catalyses (S)-4-amino-5-oxopentanoate = 5-aminolevulinate. It participates in porphyrin-containing compound metabolism; protoporphyrin-IX biosynthesis; 5-aminolevulinate from L-glutamyl-tRNA(Glu): step 2/2. It functions in the pathway porphyrin-containing compound metabolism; chlorophyll biosynthesis. The polypeptide is Glutamate-1-semialdehyde 2,1-aminomutase (Crocosphaera subtropica (strain ATCC 51142 / BH68) (Cyanothece sp. (strain ATCC 51142))).